Consider the following 354-residue polypeptide: MTEATLTPPAVPRLTSLSHGGGCGCKIAPGVLSELLKRATPPALFPDLLVGTETSDDAAVYRLNDEQAIVATTDFFMPIVDDPFDFGRIAATNALSDVYAMGGKPILALALVGMPINVLPHETIAAILRGGESVCAEAGIPVAGGHSIDSVEPIYGLAAIGVVHPSRVKRNAAARAGDVLVLGKPLGVGVLSAALKKNQLDAAGYAQMVATTTKLNRPGAELAALPGVHALTDVTGFGLLGHTLELARGANLTARVHYASLPWLAGVEAFVADGVFTGASGRNWAAYGTDVRLADGLPPVAQALLTDPQTSGGLLVACAPEAVDDVLACFRADGFDRAAVIGEMVDGPSRVDVA.

C23 is an active-site residue. ATP is bound by residues K26 and 54–56 (TSD). D57 serves as a coordination point for Mg(2+). Residues D74, D97, and 145 to 147 (GHS) each bind ATP. D97 is a binding site for Mg(2+). A Mg(2+)-binding site is contributed by D233.

This sequence belongs to the selenophosphate synthase 1 family. Class I subfamily. In terms of assembly, homodimer. The cofactor is Mg(2+).

The catalysed reaction is hydrogenselenide + ATP + H2O = selenophosphate + AMP + phosphate + 2 H(+). Functionally, synthesizes selenophosphate from selenide and ATP. This chain is Selenide, water dikinase, found in Burkholderia ambifaria (strain MC40-6).